The chain runs to 306 residues: D-alanine--D-alanine ligase (306 aa).

The 203-residue stretch at 101–303 (KQVWQAVGLP…FSQLVVKILE (203 aa)) folds into the ATP-grasp domain. 134–189 (FTHLGLPLIVKPSREGSSVGMSKVNTLSDLPAALEEAFRHDDDVLVEKWLSGPEYT) is a binding site for ATP. 3 residues coordinate Mg(2+): D257, E270, and N272.

Belongs to the D-alanine--D-alanine ligase family. Mg(2+) is required as a cofactor. It depends on Mn(2+) as a cofactor.

It is found in the cytoplasm. The enzyme catalyses 2 D-alanine + ATP = D-alanyl-D-alanine + ADP + phosphate + H(+). It functions in the pathway cell wall biogenesis; peptidoglycan biosynthesis. In terms of biological role, cell wall formation. This is D-alanine--D-alanine ligase from Pectobacterium atrosepticum (strain SCRI 1043 / ATCC BAA-672) (Erwinia carotovora subsp. atroseptica).